The chain runs to 64 residues: Temporin-ALh (64 aa).

Residues 1-22 (MFPLKKSLLLLFFLATINLSLC) form the signal peptide. Positions 23-46 (EQERNAEEERRDEPDERNAEVEKR) are excised as a propeptide. The residue at position 62 (serine 62) is a Serine amide.

This sequence belongs to the frog skin active peptide (FSAP) family. Temporin subfamily. In terms of tissue distribution, expressed by the skin glands.

It localises to the secreted. Functionally, antimicrobial peptide with activity against Gram-positive and Gram-negative bacteria and against fungi. Has been tested against S.aureus (MIC=2.5 ug/mL), B.pumilus (MIC=7.5 ug/mL), B.cereus (MIC=75.0 ug/mL), E.coli (MIC=5.0 ug/mL), B.dysenteriae (MIC=20.0 ug/mL), A.cacoaceticus (MIC=60.0 ug/mL), P.aeruginosa (MIC=2.5 ug/mL) and C.albicans (MIC=2.5 ug/mL). Also shows a weak hemolytic activity. This is Temporin-ALh from Amolops loloensis (Lolokou Sucker Frog).